The primary structure comprises 300 residues: Acetylglutamate kinase (300 aa).

Substrate is bound by residues 68–69 (GG), Arg-90, and Asn-195.

This sequence belongs to the acetylglutamate kinase family. ArgB subfamily.

It is found in the cytoplasm. It catalyses the reaction N-acetyl-L-glutamate + ATP = N-acetyl-L-glutamyl 5-phosphate + ADP. Its pathway is amino-acid biosynthesis; L-arginine biosynthesis; N(2)-acetyl-L-ornithine from L-glutamate: step 2/4. Its function is as follows. Catalyzes the ATP-dependent phosphorylation of N-acetyl-L-glutamate. The polypeptide is Acetylglutamate kinase (Azotobacter vinelandii (strain DJ / ATCC BAA-1303)).